We begin with the raw amino-acid sequence, 240 residues long: Arginine transport ATP-binding protein ArtM (240 aa).

The region spanning 2 to 236 (IKVEKLSKSF…PKSKRAQDFL (235 aa)) is the ABC transporter domain. 34–41 (GPSGSGKS) contributes to the ATP binding site.

This sequence belongs to the ABC transporter superfamily.

The protein resides in the cell membrane. In terms of biological role, part of a binding-protein-dependent transport system for arginine. Probably responsible for energy coupling to the transport system. The chain is Arginine transport ATP-binding protein ArtM (artM) from Bacillus subtilis (strain 168).